A 438-amino-acid chain; its full sequence is Nudix hydrolase 19, chloroplastic (438 aa).

A chloroplast-targeting transit peptide spans 1 to 36 (MLALFLSSSSYPTLSFLSRSVTLNLARTTTLSALTM). Residues Cys212, Cys215, Cys230, and Cys235 each coordinate Zn(2+). Substrate is bound by residues Tyr240, 276–278 (AGF), Glu292, Glu296, and Glu342. Residues 241–371 (PRVDPVVIML…EYRKAQRTAA (131 aa)) form the Nudix hydrolase domain. Residues Ala276, Glu292, Glu296, and Glu342 each coordinate Mg(2+). Residues 277–298 (GFIEPGESLEEAVRRETWEETG) carry the Nudix box motif. The short motif at 422–424 (PDD) is the Microbody targeting signal element.

This sequence belongs to the Nudix hydrolase family. NudC subfamily. Mg(2+) is required as a cofactor. It depends on Zn(2+) as a cofactor. As to expression, expressed in roots, leaves, stems and inflorescences.

The protein resides in the plastid. Its subcellular location is the chloroplast. The catalysed reaction is a 5'-end NAD(+)-phospho-ribonucleoside in mRNA + H2O = a 5'-end phospho-adenosine-phospho-ribonucleoside in mRNA + beta-nicotinamide D-ribonucleotide + 2 H(+). The enzyme catalyses NAD(+) + H2O = beta-nicotinamide D-ribonucleotide + AMP + 2 H(+). It carries out the reaction NADH + H2O = reduced beta-nicotinamide D-ribonucleotide + AMP + 2 H(+). Functionally, mRNA decapping enzyme that specifically removes the nicotinamide adenine dinucleotide (NAD) cap from a subset of mRNAs by hydrolyzing the diphosphate linkage to produce nicotinamide mononucleotide (NMN) and 5' monophosphate mRNA. The NAD-cap is present at the 5'-end of some RNAs; in contrast to the canonical N7 methylguanosine (m7G) cap, the NAD cap promotes mRNA decay. Mediates the hydrolysis of some nucleoside diphosphate derivatives. Has a high affinity for NADPH compared with that for NADH. The protein is Nudix hydrolase 19, chloroplastic (NUDT19) of Arabidopsis thaliana (Mouse-ear cress).